Here is a 333-residue protein sequence, read N- to C-terminus: Biotin synthase (333 aa).

The region spanning 46–275 (YYGKKVKLNM…TKEIRISGGR (230 aa)) is the Radical SAM core domain. [4Fe-4S] cluster-binding residues include Cys-64, Cys-68, and Cys-71. 4 residues coordinate [2Fe-2S] cluster: Cys-108, Cys-140, Cys-200, and Arg-270.

The protein belongs to the radical SAM superfamily. Biotin synthase family. In terms of assembly, homodimer. [4Fe-4S] cluster serves as cofactor. It depends on [2Fe-2S] cluster as a cofactor.

The enzyme catalyses (4R,5S)-dethiobiotin + (sulfur carrier)-SH + 2 reduced [2Fe-2S]-[ferredoxin] + 2 S-adenosyl-L-methionine = (sulfur carrier)-H + biotin + 2 5'-deoxyadenosine + 2 L-methionine + 2 oxidized [2Fe-2S]-[ferredoxin]. It participates in cofactor biosynthesis; biotin biosynthesis; biotin from 7,8-diaminononanoate: step 2/2. In terms of biological role, catalyzes the conversion of dethiobiotin (DTB) to biotin by the insertion of a sulfur atom into dethiobiotin via a radical-based mechanism. The chain is Biotin synthase from Halalkalibacterium halodurans (strain ATCC BAA-125 / DSM 18197 / FERM 7344 / JCM 9153 / C-125) (Bacillus halodurans).